We begin with the raw amino-acid sequence, 206 residues long: Pyridoxal 5'-phosphate synthase subunit PdxT (206 aa).

59 to 61 provides a ligand contact to L-glutamine; the sequence is GES. The active-site Nucleophile is C91. Residues R123 and 151–152 each bind L-glutamine; that span reads IR. Residues H187 and E189 each act as charge relay system in the active site.

It belongs to the glutaminase PdxT/SNO family. As to quaternary structure, in the presence of PdxS, forms a dodecamer of heterodimers. Only shows activity in the heterodimer.

It catalyses the reaction aldehydo-D-ribose 5-phosphate + D-glyceraldehyde 3-phosphate + L-glutamine = pyridoxal 5'-phosphate + L-glutamate + phosphate + 3 H2O + H(+). It carries out the reaction L-glutamine + H2O = L-glutamate + NH4(+). It participates in cofactor biosynthesis; pyridoxal 5'-phosphate biosynthesis. Catalyzes the hydrolysis of glutamine to glutamate and ammonia as part of the biosynthesis of pyridoxal 5'-phosphate. The resulting ammonia molecule is channeled to the active site of PdxS. In Mycobacterium sp. (strain JLS), this protein is Pyridoxal 5'-phosphate synthase subunit PdxT.